The following is a 708-amino-acid chain: Polyribonucleotide nucleotidyltransferase (708 aa).

Residues aspartate 486 and aspartate 492 each coordinate Mg(2+). In terms of domain architecture, KH spans 553–612 (PRITTIKVPPQKVREVIGSGGKVIREITEVTGTKIDIEDDGTIKIASADAEATQRAVDWI). The S1 motif domain maps to 622–690 (GVVYTGKVVK…DRGKIKLSMK (69 aa)).

Belongs to the polyribonucleotide nucleotidyltransferase family. It depends on Mg(2+) as a cofactor.

It is found in the cytoplasm. It carries out the reaction RNA(n+1) + phosphate = RNA(n) + a ribonucleoside 5'-diphosphate. Its function is as follows. Involved in mRNA degradation. Catalyzes the phosphorolysis of single-stranded polyribonucleotides processively in the 3'- to 5'-direction. The chain is Polyribonucleotide nucleotidyltransferase from Rhodospirillum rubrum (strain ATCC 11170 / ATH 1.1.1 / DSM 467 / LMG 4362 / NCIMB 8255 / S1).